Consider the following 379-residue polypeptide: Probable leucine aminopeptidase ARB_01443 (379 aa).

The N-terminal stretch at Met1–Ala18 is a signal peptide. Zn(2+) contacts are provided by His182 and Asp201. Asn202 and Asn226 each carry an N-linked (GlcNAc...) asparagine glycan. Zn(2+) is bound by residues Glu240 and Asp267. Cysteines 312 and 316 form a disulfide. His345 is a binding site for Zn(2+).

The protein belongs to the peptidase M28 family. M28E subfamily. In terms of assembly, monomer. It depends on Zn(2+) as a cofactor.

It localises to the secreted. Functionally, probable extracellular aminopeptidase which contributes to pathogenicity. In Arthroderma benhamiae (strain ATCC MYA-4681 / CBS 112371) (Trichophyton mentagrophytes), this protein is Probable leucine aminopeptidase ARB_01443.